A 62-amino-acid polypeptide reads, in one-letter code: MAKGVRIIVTLECTECRSNSNKRSPGVSRYTTTKNRRNTTSRLELKKFCTHCNKHTNHKEIK.

It belongs to the bacterial ribosomal protein bL33 family.

The sequence is that of Large ribosomal subunit protein bL33 from Acaryochloris marina (strain MBIC 11017).